Here is a 213-residue protein sequence, read N- to C-terminus: MGREFIPLFEDWAATYDATVHGADKQYAAVFKGYDNILDSIVALSGSNVLEFGPGTGNLTAKLAAANKKVFGVEPSPSMRKLAADKLSDKAVFSDGDFLEFPAPPFQIDTIVSSYAFHHLTDEEKRTAVKQYGAILQKHDKIVFADTVFKDHEAYDEAIKKAIRNGYHQLADDLKTEHYPTLGTMKNIFSEEGFAARFTQQNDFVWIMEAIKR.

Residues G53, E74, and D97 each contribute to the S-adenosyl-L-methionine site.

It belongs to the methyltransferase superfamily. YrrT family.

Could be a S-adenosyl-L-methionine-dependent methyltransferase. This is an uncharacterized protein from Bacillus velezensis (strain DSM 23117 / BGSC 10A6 / LMG 26770 / FZB42) (Bacillus amyloliquefaciens subsp. plantarum).